The sequence spans 303 residues: Uracil phosphoribosyltransferase (303 aa).

Residues 1-86 are unknown; that stretch reads MHIIMKTILA…RYVSSTPTDS (86 aa). Residues 87 to 303 are UPRTase; that stretch reads LSSKPLAAVY…DRLCGTSNPS (217 aa). Residues Arg-170, Arg-195, and 222-230 contribute to the 5-phospho-alpha-D-ribose 1-diphosphate site; that span reads DPMLATGGS. Residues Ile-285 and 290 to 292 contribute to the uracil site; that span reads GDA. Residue Asp-291 coordinates 5-phospho-alpha-D-ribose 1-diphosphate.

It belongs to the UPRTase family. Mg(2+) is required as a cofactor.

It catalyses the reaction UMP + diphosphate = 5-phospho-alpha-D-ribose 1-diphosphate + uracil. It functions in the pathway pyrimidine metabolism; UMP biosynthesis via salvage pathway; UMP from uracil: step 1/1. Allosterically activated by GTP. Catalyzes the conversion of uracil and 5-phospho-alpha-D-ribose 1-diphosphate (PRPP) to UMP and diphosphate. The protein is Uracil phosphoribosyltransferase (upp) of Chlamydia muridarum (strain MoPn / Nigg).